Consider the following 116-residue polypeptide: Large ribosomal subunit protein uL24c (116 aa).

Belongs to the universal ribosomal protein uL24 family. Part of the 50S ribosomal subunit.

The protein localises to the plastid. Its subcellular location is the chloroplast. Functionally, one of two assembly initiator proteins, it binds directly to the 5'-end of the 23S rRNA, where it nucleates assembly of the 50S subunit. This chain is Large ribosomal subunit protein uL24c (rpl24), found in Pyropia yezoensis (Susabi-nori).